The chain runs to 200 residues: Recombination protein RecR (200 aa).

A C4-type zinc finger spans residues 58 to 75 (CPCCFCLKNFPESQCEFC). One can recognise a Toprim domain in the interval 82-177 (STLCIVASPK…SISRLALGLP (96 aa)).

The protein belongs to the RecR family.

Its function is as follows. May play a role in DNA repair. It seems to be involved in an RecBC-independent recombinational process of DNA repair. It may act with RecF and RecO. The polypeptide is Recombination protein RecR (Chlamydia felis (strain Fe/C-56) (Chlamydophila felis)).